The sequence spans 509 residues: ATP synthase subunit alpha (509 aa).

Gly-169–Thr-176 is a binding site for ATP.

It belongs to the ATPase alpha/beta chains family. As to quaternary structure, F-type ATPases have 2 components, CF(1) - the catalytic core - and CF(0) - the membrane proton channel. CF(1) has five subunits: alpha(3), beta(3), gamma(1), delta(1), epsilon(1). CF(0) has three main subunits: a(1), b(2) and c(9-12). The alpha and beta chains form an alternating ring which encloses part of the gamma chain. CF(1) is attached to CF(0) by a central stalk formed by the gamma and epsilon chains, while a peripheral stalk is formed by the delta and b chains.

The protein resides in the cell inner membrane. It catalyses the reaction ATP + H2O + 4 H(+)(in) = ADP + phosphate + 5 H(+)(out). Its function is as follows. Produces ATP from ADP in the presence of a proton gradient across the membrane. The alpha chain is a regulatory subunit. This chain is ATP synthase subunit alpha, found in Paramagnetospirillum magneticum (strain ATCC 700264 / AMB-1) (Magnetospirillum magneticum).